We begin with the raw amino-acid sequence, 580 residues long: Alpha-thujene synthase TPS3, chloroplastic (580 aa).

Residues 1–26 (MALQLLTPSFSFQHSPSPHRLTTLRY) constitute a chloroplast transit peptide. The (2E)-geranyl diphosphate site is built by Arg-296, Asp-333, Asp-337, Arg-473, and Asp-476. Residues Asp-333 and Asp-337 each contribute to the Mg(2+) site. A DDXXD motif motif is present at residues 333-337 (DDVYD). Mg(2+)-binding residues include Asp-476, Thr-480, and Glu-484.

It belongs to the terpene synthase family. Tpsb subfamily. In terms of assembly, monomer. Requires Mg(2+) as cofactor. The cofactor is Mn(2+). As to expression, mostly expressed in developing and mature fruits, and, to a lower extent, in male leaves. Barely detectable in female leaves and shoots.

Its subcellular location is the plastid. It is found in the chloroplast. The enzyme catalyses (2E)-geranyl diphosphate = alpha-thujene + diphosphate. It carries out the reaction (2E)-geranyl diphosphate = (1R,5R)-sabinene + diphosphate. It participates in secondary metabolite biosynthesis; terpenoid biosynthesis. Functionally, monoterpene synthase (TPS) involved in the biosynthesis of monoterpene natural products used by traditional Chinese medicine to treat headache, inflammation and intoxication. Catalyzes the conversion of (2E)-geranyl diphosphate (GPP) into alpha-thujene and (1R,5R)-sabinene. The chain is Alpha-thujene synthase TPS3, chloroplastic from Litsea cubeba (Aromatic litsea).